A 360-amino-acid chain; its full sequence is Nucleoporin SEH1 (360 aa).

6 WD repeats span residues 10–49 (DHKD…DWHC), 55–96 (THSG…SNDK), 111–152 (DSRT…NLSQ), 160–210 (SCKL…RKYA), 217–258 (TVTD…KELT), and 276–315 (NHNS…NWKC). K12 is covalently cross-linked (Glycyl lysine isopeptide (Lys-Gly) (interchain with G-Cter in SUMO2)). 2 positions are modified to phosphoserine: S179 and S190. The segment covering 324–354 (SPVNGSSQQGTSNPSLGSNIPSLQNSLNGSS) has biased composition (polar residues). The interval 324 to 360 (SPVNGSSQQGTSNPSLGSNIPSLQNSLNGSSAGRKHS) is disordered.

Belongs to the WD repeat SEC13 family. In terms of assembly, component of the Nup107-160 subcomplex of the nuclear pore complex (NPC). The Nup107-160 subcomplex includes NUP160, NUP133, NUP107, NUP98, NUP85, NUP43, NUP37, SEH1 and SEC13. The SEH1 subunit appears to be only weakly associated with the Nup107-160 subcomplex. Component of the GATOR2 subcomplex, composed of MIOS, SEC13, SEH1L, WDR24 and WDR59. The GATOR2 complex interacts with CASTOR1 and CASTOR2; the interaction is negatively regulated by arginine. The GATOR2 complex interacts with SESN1, SESN2 and SESN3; the interaction is negatively regulated by amino acids. SESN1, SESN2 and SESN3 convey leucine availability via direct interaction with SEH1L and WDR24.

Its subcellular location is the chromosome. It is found in the centromere. It localises to the kinetochore. The protein localises to the nucleus. The protein resides in the nuclear pore complex. Its subcellular location is the lysosome membrane. Its activity is regulated as follows. The GATOR2 complex is negatively regulated by the upstream amino acid sensors CASTOR1 and SESN2, which sequester the GATOR2 complex in absence of amino acids. In the presence of abundant amino acids, GATOR2 is released from CASTOR1 and SESN2 and activated. Functionally, component of the Nup107-160 subcomplex of the nuclear pore complex (NPC). The Nup107-160 subcomplex is required for the assembly of a functional NPC. The Nup107-160 subcomplex is also required for normal kinetochore microtubule attachment, mitotic progression and chromosome segregation. This subunit plays a role in recruitment of the Nup107-160 subcomplex to the kinetochore. As a component of the GATOR2 complex, functions as an activator of the amino acid-sensing branch of the mTORC1 signaling pathway. The GATOR2 complex indirectly activates mTORC1 through the inhibition of the GATOR1 subcomplex. GATOR2 probably acts as an E3 ubiquitin-protein ligase toward GATOR1. In the presence of abundant amino acids, the GATOR2 complex mediates ubiquitination of the NPRL2 core component of the GATOR1 complex, leading to GATOR1 inactivation. In the absence of amino acids, GATOR2 is inhibited, activating the GATOR1 complex. Within the GATOR2 complex, SEC13 and SEH1L are required to stabilize the complex. In Pongo abelii (Sumatran orangutan), this protein is Nucleoporin SEH1 (SEH1L).